The following is a 696-amino-acid chain: DNA ligase (696 aa).

NAD(+)-binding positions include 55-59 (DYEFD), 105-106 (SL), and E137. The N6-AMP-lysine intermediate role is filled by K139. 4 residues coordinate NAD(+): R160, E194, K310, and K334. 4 residues coordinate Zn(2+): C428, C431, C446, and C451. The BRCT domain occupies 615-696 (NVNPNFVGKN…EFIELKDKFD (82 aa)).

This sequence belongs to the NAD-dependent DNA ligase family. LigA subfamily. Mg(2+) is required as a cofactor. Requires Mn(2+) as cofactor.

The enzyme catalyses NAD(+) + (deoxyribonucleotide)n-3'-hydroxyl + 5'-phospho-(deoxyribonucleotide)m = (deoxyribonucleotide)n+m + AMP + beta-nicotinamide D-nucleotide.. Functionally, DNA ligase that catalyzes the formation of phosphodiester linkages between 5'-phosphoryl and 3'-hydroxyl groups in double-stranded DNA using NAD as a coenzyme and as the energy source for the reaction. It is essential for DNA replication and repair of damaged DNA. The polypeptide is DNA ligase (Fusobacterium nucleatum subsp. nucleatum (strain ATCC 25586 / DSM 15643 / BCRC 10681 / CIP 101130 / JCM 8532 / KCTC 2640 / LMG 13131 / VPI 4355)).